We begin with the raw amino-acid sequence, 212 residues long: ER lumen protein-retaining receptor 1-A (212 aa).

Residues 1–4 (MNIF) lie on the Lumenal side of the membrane. The chain crosses the membrane as a helical span at residues 5-24 (RFLGDISHLSAIFILLLKIW). Topologically, residues 25–32 (KSRSCAGI) are cytoplasmic. The helical transmembrane segment at 33–52 (SGKSQLLFAIVFTARYLDLF) threads the bilayer. Residues 47–48 (RY) form an interaction with the K-D-E-L motif on target proteins region. Residues 53–58 (TNYISF) lie on the Lumenal side of the membrane. Residues 59–79 (YNTSMKVVYVASSYATVWMIY) traverse the membrane as a helical segment. Over 80 to 92 (SKFKATYDGNHDT) the chain is Cytoplasmic. The chain crosses the membrane as a helical span at residues 93-110 (FRVEFLIVPTAILAFLVN). Residues 111 to 116 (HDFTPL) lie on the Lumenal side of the membrane. Residues 117–135 (EIFWTFSIYLESVAILPQL) form a helical membrane-spanning segment. Residues 136-149 (FMVSKTGEAETITS) lie on the Cytoplasmic side of the membrane. A helical membrane pass occupies residues 150–168 (HYLFALGIYRTLYLFNWIW). An interaction with the K-D-E-L motif on target proteins region spans residues 159-169 (RTLYLFNWIWR). The Lumenal segment spans residues 169–178 (RYQFEGFFDL). The chain crosses the membrane as a helical span at residues 179–199 (IAIVAGLVQTVLYCDFFYLYV). Residues 200-212 (TKVLKGKKLSLPA) are Cytoplasmic-facing. Residues 204 to 207 (KGKK) form an important for recycling of cargo proteins with the sequence motif K-D-E-L from the Golgi to the endoplasmic reticulum region.

The protein belongs to the ERD2 family.

The protein localises to the golgi apparatus membrane. The protein resides in the cytoplasmic vesicle. Its subcellular location is the COPI-coated vesicle membrane. It localises to the endoplasmic reticulum membrane. It is found in the endoplasmic reticulum-Golgi intermediate compartment membrane. Functionally, receptor for the C-terminal sequence motif K-D-E-L that is present on endoplasmic reticulum resident proteins and that mediates their recycling from the Golgi back to the endoplasmic reticulum. The sequence is that of ER lumen protein-retaining receptor 1-A (kdelr1-a) from Xenopus laevis (African clawed frog).